The following is a 279-amino-acid chain: Phosphonates import ATP-binding protein PhnC (279 aa).

An ABC transporter domain is found at 2 to 245; the sequence is FQLKNVTRQF…AVAAIYGAET (244 aa). An ATP-binding site is contributed by 34 to 41; that stretch reads GRSGAGKS.

Belongs to the ABC transporter superfamily. Phosphonates importer (TC 3.A.1.9.1) family. In terms of assembly, the complex is composed of two ATP-binding proteins (PhnC), two transmembrane proteins (PhnE) and a solute-binding protein (PhnD).

The protein resides in the cell inner membrane. The catalysed reaction is phosphonate(out) + ATP + H2O = phosphonate(in) + ADP + phosphate + H(+). Part of the ABC transporter complex PhnCDE involved in phosphonates import. Responsible for energy coupling to the transport system. In Rhizobium meliloti (strain 1021) (Ensifer meliloti), this protein is Phosphonates import ATP-binding protein PhnC.